The chain runs to 290 residues: Ribosomal RNA small subunit methyltransferase A (290 aa).

S-adenosyl-L-methionine contacts are provided by N27, L29, G54, E75, D100, and N125.

It belongs to the class I-like SAM-binding methyltransferase superfamily. rRNA adenine N(6)-methyltransferase family. RsmA subfamily.

It localises to the cytoplasm. The catalysed reaction is adenosine(1518)/adenosine(1519) in 16S rRNA + 4 S-adenosyl-L-methionine = N(6)-dimethyladenosine(1518)/N(6)-dimethyladenosine(1519) in 16S rRNA + 4 S-adenosyl-L-homocysteine + 4 H(+). Specifically dimethylates two adjacent adenosines (A1518 and A1519) in the loop of a conserved hairpin near the 3'-end of 16S rRNA in the 30S particle. May play a critical role in biogenesis of 30S subunits. The polypeptide is Ribosomal RNA small subunit methyltransferase A (Streptococcus pneumoniae (strain ATCC BAA-255 / R6)).